We begin with the raw amino-acid sequence, 103 residues long: Probable protease inhibitor Egf0.4a (103 aa).

A signal peptide spans 1–22; that stretch reads MMSEKFALVLLVACIAFIGIET. Residues 35-87 form the TIL domain; sequence CGENEAYDSMRRGCEKRCDDHNPTFCFKFTTVCWCEKGYVRDKSDTCIKVEDC.

It belongs to the polydnaviridae EGF-like motif protein family.

This is Probable protease inhibitor Egf0.4a (O4) from Microplitis demolitor (Parasitoid wasp).